We begin with the raw amino-acid sequence, 525 residues long: Cytochrome P450 750A1 (525 aa).

A helical membrane pass occupies residues 13–33 (PLPLPAILIATFIFFFSCWIL). C465 is a heme binding site.

Belongs to the cytochrome P450 family. Requires heme as cofactor.

The protein localises to the membrane. In Pinus taeda (Loblolly pine), this protein is Cytochrome P450 750A1 (CYP750A1).